Here is a 495-residue protein sequence, read N- to C-terminus: MFS transporter prlL (495 aa).

Residues 1-24 form a disordered region; that stretch reads MAQSFANEHDPAKRAEERGHVGTI. Basic and acidic residues predominate over residues 7–20; that stretch reads NEHDPAKRAEERGH. The next 11 membrane-spanning stretches (helical) occupy residues 102-122, 130-150, 159-179, 189-209, 224-244, 292-312, 329-349, 356-376, 386-406, 418-438, and 449-469; these read IALM…NVLL, WIAI…GAHN, FLLG…LTFW, VAFI…IAYA, WLFI…LFFL, LWAH…LSLF, LMTV…SWSA, GLHS…SAVL, GCLI…LGWL, LAIA…GVWI, and PTGH…CVAL.

It belongs to the major facilitator superfamily.

The protein localises to the cell membrane. Efflux pump that might be required for efficient secretion of pyrrolocin or other secondary metabolies produced by the pyrrolocin gene cluster. This is MFS transporter prlL from Fungal sp. (strain NRRL 50135).